We begin with the raw amino-acid sequence, 318 residues long: N-acyl-aromatic-L-amino acid amidohydrolase (carboxylate-forming) (318 aa).

The hydrolytic domain stretch occupies residues 1–210 (MSSLPGSREP…ILDFIELFNQ (210 aa)). 2 residues coordinate Zn(2+): His21 and Glu24. Substrate is bound by residues Arg63 and 70–71 (NR). A Zn(2+)-binding site is contributed by His116. Substrate-binding residues include Glu177 and Tyr287. Residues 211-318 (GMDLPAFEMD…RLTPRSTQTP (108 aa)) form a shielding domain region. Thr317 carries the phosphothreonine modification.

It belongs to the AspA/AstE family. Aspartoacylase subfamily. In terms of assembly, exists as a mixture of homodimers and homotetramer, both catalytically active. Zn(2+) is required as a cofactor. As to expression, expressed predominantly in kidney and to a lesser extent in liver. Weakly expressed in heart, small intestine, brain, lung, testis, and stomach.

It is found in the apical cell membrane. It localises to the cytoplasm. It carries out the reaction an N-acyl-aromatic L-alpha-amino acid + H2O = an aromatic L-alpha-amino acid + a carboxylate. It catalyses the reaction an N-acetyl-L-cysteine-S-conjugate + H2O = an S-substituted L-cysteine + acetate. In terms of biological role, plays an important role in deacetylating mercapturic acids in kidney proximal tubules. Also acts on N-acetyl-aromatic amino acids. The sequence is that of N-acyl-aromatic-L-amino acid amidohydrolase (carboxylate-forming) (Acy3) from Mus musculus (Mouse).